We begin with the raw amino-acid sequence, 358 residues long: Na(+)/H(+) exchange regulatory cofactor NHE-RF1 (358 aa).

At Ser-2 the chain carries N-acetylserine. Ser-2 and Ser-46 each carry phosphoserine. The 81-residue stretch at 14 to 94 folds into the PDZ 1 domain; sequence LCCLEKGPNG…AVRLLVVDPD (81 aa). Positions 114–134 are enriched in low complexity; the sequence is QAGPEQAGPPAAPGEQGPAGE. Positions 114-151 are disordered; sequence QAGPEQAGPPAAPGEQGPAGENEPREVEKSHPERRELR. Over residues 135 to 151 the composition is skewed to basic and acidic residues; sequence NEPREVEKSHPERRELR. Positions 154–234 constitute a PDZ 2 domain; it reads LCAMKKGPNG…EAKLLVVDKE (81 aa). The segment at 247 to 358 is disordered; it reads SSEHLNGPLP…SEKKELFSNL (112 aa). The span at 272-290 shows a compositional bias: low complexity; it reads LAPAASESPRPALARSASS. Ser-279, Ser-289, and Ser-290 each carry phosphoserine. Phosphothreonine is present on Thr-292. Phosphoserine is present on residues Ser-293, Ser-298, and Ser-301. Over residues 308 to 327 the composition is skewed to low complexity; the sequence is TAPSSTSSSSDPILDFSISL. Residues 348-358 show a composition bias toward basic and acidic residues; that stretch reads WSEKKELFSNL.

In terms of assembly, homodimer, and heterodimer with NHERF2. Binds the N-termini of EZR, RDX and MSN. Binds the C-termini of PDGFRA, PDGFRB, ADRB2, NOS2 and CFTR. Binds ARHGAP17, EPI64, RACK1, OPRK1, GNAQ, CTNNB1 and PLCB3. Binds PDZK1. Interacts with CLCN3. Binds the C-terminus of PAG1. In resting T-cells, part of a PAG1-NHERF1-MSN complex which is disrupted upon TCR activation. Forms a complex with CFTR and SLC4A7. Forms a complex with SLC4A7 and ATP6V1B1. Interacts with TRPC4 (via the PDZ-binding domain). Directly interacts with HTR4. Interacts (via the PDZ 1 domain) with PODXL (via the C-terminal PDZ-binding motif DTHL); interaction is not detected in glomerular epithelium cells. Interacts (via the PDZ 1 domain) with PODXL (via the C-terminal PDZ-binding motif DTHL); the interaction take place early in the secretory pathway and is necessary for its apical membrane sorting. Interacts with SLC26A3. Interacts with MCC. Interacts with SLC34A1. Interacts (via the PDZ domains) with SLC26A6 isoform 4 and isoform 5. Interacts (via PDZ domains) with ACE2 (via PDZ-binding motif); the interaction may enhance ACE2 membrane residence. Phosphorylated on serine residues. In terms of tissue distribution, detected in ileum, duodenum and in kidney, where it is found in the glomerulus, the proximal tubule, the thick ascending limb of Henle's loop and the cortical collecting duct.

It is found in the cytoplasm. The protein localises to the apical cell membrane. Its subcellular location is the cell projection. The protein resides in the filopodium. It localises to the ruffle. It is found in the microvillus. The protein localises to the endomembrane system. Its function is as follows. Scaffold protein that connects plasma membrane proteins with members of the ezrin/moesin/radixin family and thereby helps to link them to the actin cytoskeleton and to regulate their surface expression. Necessary for recycling of internalized ADRB2. Was first known to play a role in the regulation of the activity and subcellular location of SLC9A3. Necessary for cAMP-mediated phosphorylation and inhibition of SLC9A3. Involved in sperm capacitation. May participate in the regulation of the chloride and bicarbonate homeostasis in spermatozoa. May enhance Wnt signaling. May participate in HTR4 targeting to microvilli. Involved in the regulation of phosphate reabsorption in the renal proximal tubules. The protein is Na(+)/H(+) exchange regulatory cofactor NHE-RF1 (NHERF1) of Oryctolagus cuniculus (Rabbit).